The sequence spans 633 residues: UvrABC system protein C (633 aa).

Positions 21-100 constitute a GIY-YIG domain; sequence TDPGVYKFLD…IKELQPRYNV (80 aa). Residues 214–249 form the UVR domain; sequence QELMDLLKDEMQRQSDAHNFEEAARLRDQVKALKDY.

This sequence belongs to the UvrC family. Interacts with UvrB in an incision complex.

The protein resides in the cytoplasm. The UvrABC repair system catalyzes the recognition and processing of DNA lesions. UvrC both incises the 5' and 3' sides of the lesion. The N-terminal half is responsible for the 3' incision and the C-terminal half is responsible for the 5' incision. The protein is UvrABC system protein C of Salinibacter ruber (strain DSM 13855 / M31).